Reading from the N-terminus, the 149-residue chain is MRAVVQRVSRGEVSVGGEMVSSIGKGFVVLVGISIDDNENDVMYMADKIVNLRVFEDEEGKMNLSLLDIGGEVLLVSQFTLLGDVRKGRRPNFMMAQKPQEALKYFNLLVKEIEKRGVSVKTGIFQAMMKVLIENDGPVTILIDSKKVF.

The short motif at 137–138 (GP) is the Gly-cisPro motif, important for rejection of L-amino acids element.

It belongs to the DTD family. In terms of assembly, homodimer.

The protein resides in the cytoplasm. The enzyme catalyses glycyl-tRNA(Ala) + H2O = tRNA(Ala) + glycine + H(+). It catalyses the reaction a D-aminoacyl-tRNA + H2O = a tRNA + a D-alpha-amino acid + H(+). Functionally, an aminoacyl-tRNA editing enzyme that deacylates mischarged D-aminoacyl-tRNAs. Also deacylates mischarged glycyl-tRNA(Ala), protecting cells against glycine mischarging by AlaRS. Acts via tRNA-based rather than protein-based catalysis; rejects L-amino acids rather than detecting D-amino acids in the active site. By recycling D-aminoacyl-tRNA to D-amino acids and free tRNA molecules, this enzyme counteracts the toxicity associated with the formation of D-aminoacyl-tRNA entities in vivo and helps enforce protein L-homochirality. This chain is D-aminoacyl-tRNA deacylase, found in Thermoanaerobacter pseudethanolicus (strain ATCC 33223 / 39E) (Clostridium thermohydrosulfuricum).